Reading from the N-terminus, the 477-residue chain is Tripartite motif-containing protein 72 (477 aa).

Residues Cys-14, Cys-17, Cys-29, His-31, Cys-34, Cys-37, Cys-53, Cys-56, Cys-86, His-89, Cys-97, Asp-100, Cys-105, Cys-108, His-114, and His-117 each coordinate Zn(2+). The segment at 14–57 (CPLCLQLFDAPVTAECGHSFCRACLIRVAGEPADDGTVACPCCQ) adopts an RING-type zinc-finger fold. A B box-type zinc finger spans residues 81–122 (VPQGHCEEHLDPLSIYCEQDRTLVCGVCASLGSHRGHRLLPA). Residues 135 to 232 (QQKAQLQEAC…EKVLEEVADK (98 aa)) are a coiled coil. An S-nitrosocysteine modification is found at Cys-144. Ser-255 bears the Phosphoserine mark. The region spanning 271-475 (DFKFQVWKKM…PLLLVGPDSE (205 aa)) is the B30.2/SPRY domain.

It belongs to the TRIM/RBCC family. Homodimer. Homooligomer; disulfide-linked. Oligomerizes on the phospholipid membrane. Interacts with DYSF and CAV3. In terms of processing, disulfide bond formation at Cys-242 occurs in case of membrane damage that cause the entry of the oxidized milieu of the extracellular space, resulting in homooligomerization. S-nitrosylation at Cys-144 stabilizes TRIM72 and protects against oxidation-induced protein degradation and cell death.

Its subcellular location is the cell membrane. The protein localises to the sarcolemma. It is found in the cytoplasmic vesicle membrane. The enzyme catalyses S-ubiquitinyl-[E2 ubiquitin-conjugating enzyme]-L-cysteine + [acceptor protein]-L-lysine = [E2 ubiquitin-conjugating enzyme]-L-cysteine + N(6)-ubiquitinyl-[acceptor protein]-L-lysine.. It participates in protein modification; protein ubiquitination. Specifically binds phosphatidylserine. The binding to phospholipids enhances ubiquitination activity. Muscle-specific E3 ubiquitin-protein ligase that plays a central role in cell membrane repair by nucleating the assembly of the repair machinery at injury sites. Its ubiquitination activity is mediated by E2 ubiquitin-conjugating enzymes UBE2D1, UBE2D2 and UBE2D3. Acts as a sensor of oxidation: upon membrane damage, entry of extracellular oxidative environment results in disulfide bond formation and homooligomerization at the injury site. This oligomerization acts as a nucleation site for recruitment of TRIM72-containing vesicles to the injury site, leading to membrane patch formation. Probably acts upstream of the Ca(2+)-dependent membrane resealing process. Required for transport of DYSF to sites of cell injury during repair patch formation. Regulates membrane budding and exocytosis. May be involved in the regulation of the mobility of KCNB1-containing endocytic vesicles. This Rattus norvegicus (Rat) protein is Tripartite motif-containing protein 72.